Here is a 670-residue protein sequence, read N- to C-terminus: tRNA 5-methylaminomethyl-2-thiouridine biosynthesis bifunctional protein MnmC (670 aa).

Residues 1–242 (MTFSVQHAEI…KRECLSGLKI (242 aa)) are tRNA (mnm(5)s(2)U34)-methyltransferase. An FAD-dependent cmnm(5)s(2)U34 oxidoreductase region spans residues 269–670 (IGGGIASFCA…KKWLKGSKVE (402 aa)).

This sequence in the N-terminal section; belongs to the methyltransferase superfamily. tRNA (mnm(5)s(2)U34)-methyltransferase family. It in the C-terminal section; belongs to the DAO family. It depends on FAD as a cofactor.

It is found in the cytoplasm. The enzyme catalyses 5-aminomethyl-2-thiouridine(34) in tRNA + S-adenosyl-L-methionine = 5-methylaminomethyl-2-thiouridine(34) in tRNA + S-adenosyl-L-homocysteine + H(+). Its function is as follows. Catalyzes the last two steps in the biosynthesis of 5-methylaminomethyl-2-thiouridine (mnm(5)s(2)U) at the wobble position (U34) in tRNA. Catalyzes the FAD-dependent demodification of cmnm(5)s(2)U34 to nm(5)s(2)U34, followed by the transfer of a methyl group from S-adenosyl-L-methionine to nm(5)s(2)U34, to form mnm(5)s(2)U34. This is tRNA 5-methylaminomethyl-2-thiouridine biosynthesis bifunctional protein MnmC from Haemophilus influenzae (strain 86-028NP).